We begin with the raw amino-acid sequence, 210 residues long: Redox-sensing transcriptional repressor Rex (210 aa).

A DNA-binding region (H-T-H motif) is located at residues 16 to 55 (IYSRYLRQLIEEGVETVSSGEIAAGVGVSSAQVRKDLAYF). 90 to 95 (GAGKLG) contributes to the NAD(+) binding site.

It belongs to the transcriptional regulatory Rex family. As to quaternary structure, homodimer.

The protein resides in the cytoplasm. Its function is as follows. Modulates transcription in response to changes in cellular NADH/NAD(+) redox state. This Syntrophomonas wolfei subsp. wolfei (strain DSM 2245B / Goettingen) protein is Redox-sensing transcriptional repressor Rex.